The following is a 1430-amino-acid chain: 3'-5' RNA helicase YTHDC2 (1430 aa).

A disordered region spans residues M1–K37. The span at P14–A33 shows a compositional bias: gly residues. An R3H domain is found at D38–D106. The region spanning V203–Q369 is the Helicase ATP-binding domain. G216–T223 provides a ligand contact to ATP. Residues D316 to H319 carry the DEAH box motif. ANK repeat units follow at residues T506 to S538 and N539 to L571. A Helicase C-terminal domain is found at L612 to A784. 3 positions are modified to phosphoserine: S1089, S1090, and S1092. A compositionally biased stretch (polar residues) spans E1164 to G1174. Positions E1164–V1288 are disordered. A compositionally biased stretch (low complexity) spans S1191–K1200. The residue at position 1202 (S1202) is a Phosphoserine. Residues K1231 to D1249 show a composition bias toward basic and acidic residues. A compositionally biased stretch (low complexity) spans Q1250 to P1264. A phosphoserine mark is found at S1263, S1267, and S1281. The YTH domain maps to V1288–W1418. RNA is bound by residues K1294–S1296, W1310, and W1360.

The protein belongs to the DEAD box helicase family. DEAH subfamily. Interacts with MEIOC; binds transcripts that regulate the mitotic cell cycle inhibiting progression into metaphase, thereby allowing meiotic prophase to proceed normally. Interacts (via ANK repeats) with XRN1. Interacts with ZCCHC4. Associates with the small ribosomal subunit. Interacts with RBM46. As to expression, expressed in testis. Not detected in spermatogonia next to the tubule wall but is strongly expressed in spermatocytes, suggesting that it is up-regulated in germ cells upon entry into meiosis.

It is found in the cytoplasm. The protein localises to the perinuclear region. It catalyses the reaction ATP + H2O = ADP + phosphate + H(+). Its function is as follows. 3'-5' RNA helicase that plays a key role in the male and female germline by promoting transition from mitotic to meiotic divisions in stem cells. Specifically recognizes and binds N6-methyladenosine (m6A)-containing RNAs, a modification present at internal sites of mRNAs and some non-coding RNAs that plays a role in the efficiency of RNA processing and stability. Essential for ensuring a successful progression of the meiotic program in the germline by regulating the level of m6A-containing RNAs. Acts by binding and promoting degradation of m6A-containing mRNAs: the 3'-5' RNA helicase activity is required for this process and RNA degradation may be mediated by XRN1 exoribonuclease. Required for both spermatogenesis and oogenesis. The protein is 3'-5' RNA helicase YTHDC2 of Homo sapiens (Human).